The following is a 467-amino-acid chain: A-type ATP synthase subunit B (467 aa).

The disordered stretch occupies residues 95–114 (GKGQPRDHMPLPPPEDFRDV).

It belongs to the ATPase alpha/beta chains family. As to quaternary structure, has multiple subunits with at least A(3), B(3), C, D, E, F, H, I and proteolipid K(x).

Its subcellular location is the cell membrane. Functionally, component of the A-type ATP synthase that produces ATP from ADP in the presence of a proton gradient across the membrane. The B chain is a regulatory subunit. This is A-type ATP synthase subunit B from Pyrobaculum aerophilum (strain ATCC 51768 / DSM 7523 / JCM 9630 / CIP 104966 / NBRC 100827 / IM2).